We begin with the raw amino-acid sequence, 396 residues long: Probable tRNA sulfurtransferase (396 aa).

One can recognise a THUMP domain in the interval 58–169 (NQFIEKLKMV…KKNIYVFTRS (112 aa)). ATP contacts are provided by residues 187-188 (LL), 212-213 (YF), Arg269, Gly291, and Gln300.

This sequence belongs to the ThiI family.

The protein localises to the cytoplasm. It carries out the reaction [ThiI sulfur-carrier protein]-S-sulfanyl-L-cysteine + a uridine in tRNA + 2 reduced [2Fe-2S]-[ferredoxin] + ATP + H(+) = [ThiI sulfur-carrier protein]-L-cysteine + a 4-thiouridine in tRNA + 2 oxidized [2Fe-2S]-[ferredoxin] + AMP + diphosphate. The catalysed reaction is [ThiS sulfur-carrier protein]-C-terminal Gly-Gly-AMP + S-sulfanyl-L-cysteinyl-[cysteine desulfurase] + AH2 = [ThiS sulfur-carrier protein]-C-terminal-Gly-aminoethanethioate + L-cysteinyl-[cysteine desulfurase] + A + AMP + 2 H(+). It functions in the pathway cofactor biosynthesis; thiamine diphosphate biosynthesis. Catalyzes the ATP-dependent transfer of a sulfur to tRNA to produce 4-thiouridine in position 8 of tRNAs, which functions as a near-UV photosensor. Also catalyzes the transfer of sulfur to the sulfur carrier protein ThiS, forming ThiS-thiocarboxylate. This is a step in the synthesis of thiazole, in the thiamine biosynthesis pathway. The sulfur is donated as persulfide by IscS. The sequence is that of Probable tRNA sulfurtransferase from Halothermothrix orenii (strain H 168 / OCM 544 / DSM 9562).